The primary structure comprises 244 residues: MSQFNLNELNALPKAEQAAALALVNGQLEHLTAQERVSWALENLPGEFVLSSSFGIQAAVCLHLVTRQQPDIPVILTDTGYLFPETYQFIDSLTEKLQLNLQVFRAQQSPAWQEARYGKLWEQGVEGIERYNDLNKVEPMNRALETLGAQTWFAGLRREQSGSRAKLPVLAIARGVFKLLPIIDWDNRQVYQYLTQHGLSYHPLWEQGYLSVGDTHTTRKWEPGMSEEETRFFGLKRECGLHES.

The active-site Nucleophile; cysteine thiosulfonate intermediate is Cys-239.

The protein belongs to the PAPS reductase family. CysH subfamily.

It localises to the cytoplasm. The enzyme catalyses [thioredoxin]-disulfide + sulfite + adenosine 3',5'-bisphosphate + 2 H(+) = [thioredoxin]-dithiol + 3'-phosphoadenylyl sulfate. The protein operates within sulfur metabolism; hydrogen sulfide biosynthesis; sulfite from sulfate: step 3/3. Its function is as follows. Catalyzes the formation of sulfite from phosphoadenosine 5'-phosphosulfate (PAPS) using thioredoxin as an electron donor. This chain is Phosphoadenosine 5'-phosphosulfate reductase, found in Yersinia enterocolitica serotype O:8 / biotype 1B (strain NCTC 13174 / 8081).